A 213-amino-acid chain; its full sequence is Endonuclease III (213 aa).

The HhH domain maps to 101-120; it reads LEELLKLPGVGRKTANIVLW. Cys180, Cys187, Cys190, and Cys196 together coordinate [4Fe-4S] cluster.

The protein belongs to the Nth/MutY family. [4Fe-4S] cluster is required as a cofactor.

It carries out the reaction 2'-deoxyribonucleotide-(2'-deoxyribose 5'-phosphate)-2'-deoxyribonucleotide-DNA = a 3'-end 2'-deoxyribonucleotide-(2,3-dehydro-2,3-deoxyribose 5'-phosphate)-DNA + a 5'-end 5'-phospho-2'-deoxyribonucleoside-DNA + H(+). In terms of biological role, DNA repair enzyme that has both DNA N-glycosylase activity and AP-lyase activity. The DNA N-glycosylase activity releases various damaged pyrimidines from DNA by cleaving the N-glycosidic bond, leaving an AP (apurinic/apyrimidinic) site. The AP-lyase activity cleaves the phosphodiester bond 3' to the AP site by a beta-elimination, leaving a 3'-terminal unsaturated sugar and a product with a terminal 5'-phosphate. The chain is Endonuclease III from Thermotoga maritima (strain ATCC 43589 / DSM 3109 / JCM 10099 / NBRC 100826 / MSB8).